A 513-amino-acid polypeptide reads, in one-letter code: PPE family protein PPE4 (513 aa).

Transmembrane regions (helical) follow at residues isoleucine 233–phenylalanine 253, phenylalanine 277–leucine 297, and leucine 309–glycine 329. Disordered stretches follow at residues alanine 395–alanine 446 and leucine 469–lysine 513.

It belongs to the mycobacterial PPE family.

It localises to the cell membrane. Functionally, important for the siderophore-mediated iron-acquisition function of ESX-3. This chain is PPE family protein PPE4 (PPE4), found in Mycobacterium tuberculosis (strain CDC 1551 / Oshkosh).